We begin with the raw amino-acid sequence, 189 residues long: 6,7-dimethyl-8-ribityllumazine synthase (189 aa).

Residues tryptophan 31, 65-67, and 89-91 contribute to the 5-amino-6-(D-ribitylamino)uracil site; these read SFE and CVI. 94-95 is a (2S)-2-hydroxy-3-oxobutyl phosphate binding site; that stretch reads ET. Catalysis depends on histidine 97, which acts as the Proton donor. Phenylalanine 122 contributes to the 5-amino-6-(D-ribitylamino)uracil binding site. Arginine 136 contacts (2S)-2-hydroxy-3-oxobutyl phosphate.

The protein belongs to the DMRL synthase family.

The enzyme catalyses (2S)-2-hydroxy-3-oxobutyl phosphate + 5-amino-6-(D-ribitylamino)uracil = 6,7-dimethyl-8-(1-D-ribityl)lumazine + phosphate + 2 H2O + H(+). The protein operates within cofactor biosynthesis; riboflavin biosynthesis; riboflavin from 2-hydroxy-3-oxobutyl phosphate and 5-amino-6-(D-ribitylamino)uracil: step 1/2. Functionally, catalyzes the formation of 6,7-dimethyl-8-ribityllumazine by condensation of 5-amino-6-(D-ribitylamino)uracil with 3,4-dihydroxy-2-butanone 4-phosphate. This is the penultimate step in the biosynthesis of riboflavin. This chain is 6,7-dimethyl-8-ribityllumazine synthase, found in Flavobacterium psychrophilum (strain ATCC 49511 / DSM 21280 / CIP 103535 / JIP02/86).